The following is a 67-amino-acid chain: Penaeidin-4c (67 aa).

Residues 1–19 (MRLVVCLVFLASFALVCQG) form the signal peptide. 3 disulfides stabilise this stretch: Cys42-Cys56, Cys45-Cys63, and Cys57-Cys64. Residue Arg66 is modified to Arginine amide.

It belongs to the penaeidin family.

It localises to the cytoplasmic granule. In terms of biological role, antibacterial and antifungal activity. Presents chitin-binding activity. In Penaeus vannamei (Whiteleg shrimp), this protein is Penaeidin-4c.